We begin with the raw amino-acid sequence, 331 residues long: 6-phosphogluconolactonase (331 aa).

The protein belongs to the cycloisomerase 2 family.

The enzyme catalyses 6-phospho-D-glucono-1,5-lactone + H2O = 6-phospho-D-gluconate + H(+). Its pathway is carbohydrate degradation; pentose phosphate pathway; D-ribulose 5-phosphate from D-glucose 6-phosphate (oxidative stage): step 2/3. In terms of biological role, catalyzes the hydrolysis of 6-phosphogluconolactone to 6-phosphogluconate. This is 6-phosphogluconolactonase from Salmonella arizonae (strain ATCC BAA-731 / CDC346-86 / RSK2980).